The chain runs to 307 residues: High-affinity branched-chain amino acid transport system permease protein BraD (307 aa).

10 helical membrane-spanning segments follow: residues 21-41, 45-65, 70-90, 104-124, 132-152, 154-174, 203-223, 224-244, 245-265, and 280-300; these read YALIAIGYTMVYGIIGMINFA, VYMIGSYIAFIAITLLAMMGL, LMMLAAFAASIIVTSAFGYSI, LIPLISAIGMSIFLQNAVMLS, IPTLLPGNFVFGESSMNGVVI, YMQILIFVVTFLVMFGLTLFI, IIALTFVIGAALAAVAAVLLG, MQYGVINPGIGFLAGIKAFTA, AVLGGIGSIPGAMLGGLLLGV, and DVVAFGLLILVLLFRPTGILG.

The protein belongs to the binding-protein-dependent transport system permease family. LivHM subfamily.

Its subcellular location is the cell inner membrane. Its function is as follows. Component of the high affinity leucine, isoleucine, valine, transport system (LIV-I), which is operative without Na(+) and is specific for alanine and threonine, in addition to branched-chain amino acids. This Pseudomonas aeruginosa (strain ATCC 15692 / DSM 22644 / CIP 104116 / JCM 14847 / LMG 12228 / 1C / PRS 101 / PAO1) protein is High-affinity branched-chain amino acid transport system permease protein BraD (braD).